We begin with the raw amino-acid sequence, 274 residues long: Putative outer membrane protein CPn_1073/CP_0776/CPj1073/CpB1118 (274 aa).

The signal sequence occupies residues 1–21 (MRRYLFMVLALCLYRAAPLEA).

The protein resides in the cell outer membrane. The protein is Putative outer membrane protein CPn_1073/CP_0776/CPj1073/CpB1118 of Chlamydia pneumoniae (Chlamydophila pneumoniae).